The following is a 323-amino-acid chain: Global nitrogen regulator NrpRI (323 aa).

The winged helix-turn-helix stretch occupies residues 11 to 76; that stretch reads IEIMRVIHES…TLTDLGENEM (66 aa). Residues 86-323 are NRD; that stretch reads GFVISRIEEM…MLDYQTMKEI (238 aa).

The protein belongs to the NrpR family. In terms of assembly, forms a complex with NrpRII and the general archaeal transcription factors TBP and TFB. Interacts directly with NrpRII.

Under nitrogen limitation, binding of 2-oxoglutarate to the NrpRI/NrpRII complex decreases the binding affinity of NrpRI to DNA as well as the binding affinity of NrpRII to TBP and TFB, which leads to removal of the complex from the operator, RNA polymerase recruitment and initiation of transcription. In terms of biological role, plays a major role in nitrogen regulation. Under nitrogen sufficiency, binds to the nifH and the glnk1 promoters, leading to repression of the transcription of the genes. The protein is Global nitrogen regulator NrpRI of Methanosarcina mazei (strain ATCC BAA-159 / DSM 3647 / Goe1 / Go1 / JCM 11833 / OCM 88) (Methanosarcina frisia).